A 454-amino-acid chain; its full sequence is Protoheme IX farnesyltransferase 1 (454 aa).

The segment at 1 to 186 (MRTTGFSGLL…AYFELTKPRL (186 aa)) is unknown. The next 4 membrane-spanning stretches (helical) occupy residues 9 to 29 (LLSA…TAAL), 59 to 79 (GVAA…WSET), 87 to 107 (LALA…VATG), and 113 to 133 (LHLF…AWHL). Positions 137–164 (TGSDDAPESPPELAPPVDEEPAATEQPA) are disordered. The next 9 membrane-spanning stretches (helical) occupy residues 186-206 (LMWL…TPTV), 209-229 (VVFT…FNHV), 251-271 (VPVA…LWAF), 276-296 (LLAA…YTLI), 300-320 (NTVQ…LIGY), 321-341 (AAVT…IFLW), 377-397 (HIVF…AVTD), 398-418 (LGWL…WAVV), and 433-453 (FHAS…DSLA). Residues 187–451 (MWLLCLVAGA…LVLVAILIDS (265 aa)) are protoheme IX prenyltransferase.

It in the C-terminal section; belongs to the UbiA prenyltransferase family. Protoheme IX farnesyltransferase subfamily.

Its subcellular location is the cell membrane. The catalysed reaction is heme b + (2E,6E)-farnesyl diphosphate + H2O = Fe(II)-heme o + diphosphate. Its pathway is porphyrin-containing compound metabolism; heme O biosynthesis; heme O from protoheme: step 1/1. Converts heme B (protoheme IX) to heme O by substitution of the vinyl group on carbon 2 of heme B porphyrin ring with a hydroxyethyl farnesyl side group. This is Protoheme IX farnesyltransferase 1 (ctaB1) from Natronomonas pharaonis (strain ATCC 35678 / DSM 2160 / CIP 103997 / JCM 8858 / NBRC 14720 / NCIMB 2260 / Gabara) (Halobacterium pharaonis).